Reading from the N-terminus, the 378-residue chain is Ribosomal RNA large subunit methyltransferase G (378 aa).

This sequence belongs to the methyltransferase superfamily. RlmG family.

Its subcellular location is the cytoplasm. The catalysed reaction is guanosine(1835) in 23S rRNA + S-adenosyl-L-methionine = N(2)-methylguanosine(1835) in 23S rRNA + S-adenosyl-L-homocysteine + H(+). Functionally, specifically methylates the guanine in position 1835 (m2G1835) of 23S rRNA. The chain is Ribosomal RNA large subunit methyltransferase G from Escherichia coli O9:H4 (strain HS).